The following is a 134-amino-acid chain: D-ribose pyranase (134 aa).

The active-site Proton donor is His20. Residues Asp28, His101, and 123 to 125 (YSN) each bind substrate.

It belongs to the RbsD / FucU family. RbsD subfamily. As to quaternary structure, homodecamer.

The protein resides in the cytoplasm. The enzyme catalyses beta-D-ribopyranose = beta-D-ribofuranose. Its pathway is carbohydrate metabolism; D-ribose degradation; D-ribose 5-phosphate from beta-D-ribopyranose: step 1/2. Its function is as follows. Catalyzes the interconversion of beta-pyran and beta-furan forms of D-ribose. The polypeptide is D-ribose pyranase (Pseudomonas syringae pv. tomato (strain ATCC BAA-871 / DC3000)).